An 840-amino-acid chain; its full sequence is Lethal(3)malignant brain tumor-like protein 1 (840 aa).

A Phosphoserine modification is found at serine 117. Residues 127–269 (EYEDGGAPAG…WSSSQPATGE (143 aa)) form a disordered region. Residues 156–165 (PNQDPPEDDS) are compositionally biased toward acidic residues. Positions 200–210 (VENSSGSTSAS) are enriched in polar residues. Residues 236–247 (AMEKQEEGKDPE) show a composition bias toward basic and acidic residues. Residues 250 to 266 (PTASTPESEEWSSSQPA) show a composition bias toward polar residues. MBT repeat units follow at residues 274 to 374 (WSWE…LQPP), 382 to 481 (FSWS…LTPP), and 490 to 585 (FCWE…LQPP). Positions 447 to 454 (FDNWDDTY) are interaction with monomethylated and dimethylated peptides. The disordered stretch occupies residues 580–605 (HPLQPPLGPREPSSASPGGCPPLSYR). Residues 613–656 (SKYSFHHRKCPTPGCDGSGHVTGKFTAHHCLSGCPLAERNQSRL) form a CCHHC-type zinc finger. Zn(2+)-binding residues include cysteine 622, cysteine 627, histidine 640, and cysteine 646. The tract at residues 657–697 (KAELSDSEASARKKNLSGFSPRKKPRHHGRIGRPPKYRKIP) is disordered. Residues 677 to 695 (PRKKPRHHGRIGRPPKYRK) show a composition bias toward basic residues.

In terms of assembly, homodimer. Interacts with RB1/RB (when monomethylated at 'Lys-860'). Interacts with p53/TP53 (when monomethylated at 'Lys-382'). Interacts with CBX3, ETV6, KMT5A and VCP/p97. Post-translationally, ubiquitinated in a VCP/p97-dependent way following DNA damage, leading to its removal from DNA damage sites, promoting accessibility of H4K20me2 mark for DNA repair protein TP53BP1, which is then recruited to DNA damage sites. In terms of tissue distribution, widely expressed. Expression is reduced in colorectal cancer cell line SW480 and promyelocytic leukemia cell line HL-60.

The protein resides in the nucleus. Functionally, polycomb group (PcG) protein that specifically recognizes and binds mono- and dimethyllysine residues on target proteins, thereby acting as a 'reader' of a network of post-translational modifications. PcG proteins maintain the transcriptionally repressive state of genes: acts as a chromatin compaction factor by recognizing and binding mono- and dimethylated histone H1b/H1-4 at 'Lys-26' (H1bK26me1 and H1bK26me2) and histone H4 at 'Lys-20' (H4K20me1 and H4K20me2), leading to condense chromatin and repress transcription. Recognizes and binds p53/TP53 monomethylated at 'Lys-382', leading to repress p53/TP53-target genes. Also recognizes and binds RB1/RB monomethylated at 'Lys-860'. Participates in the ETV6-mediated repression. Probably plays a role in cell proliferation. Overexpression induces multinucleated cells, suggesting that it is required to accomplish normal mitosis. This Homo sapiens (Human) protein is Lethal(3)malignant brain tumor-like protein 1 (L3MBTL1).